The chain runs to 358 residues: Uroporphyrinogen decarboxylase (358 aa).

Residues 29–33 (RQAGR), Phe48, Asp79, Tyr155, Ser210, and His330 contribute to the substrate site.

It belongs to the uroporphyrinogen decarboxylase family. In terms of assembly, homodimer.

The protein resides in the cytoplasm. It catalyses the reaction uroporphyrinogen III + 4 H(+) = coproporphyrinogen III + 4 CO2. Its pathway is porphyrin-containing compound metabolism; protoporphyrin-IX biosynthesis; coproporphyrinogen-III from 5-aminolevulinate: step 4/4. In terms of biological role, catalyzes the decarboxylation of four acetate groups of uroporphyrinogen-III to yield coproporphyrinogen-III. In Bordetella bronchiseptica (strain ATCC BAA-588 / NCTC 13252 / RB50) (Alcaligenes bronchisepticus), this protein is Uroporphyrinogen decarboxylase.